The sequence spans 450 residues: Probable ECA polymerase (450 aa).

11 helical membrane passes run 6-26 (FSGL…LTWF), 37-57 (VFFS…TSVL), 63-83 (VGVA…CFYA), 118-138 (VILM…NGFL), 155-175 (GVAL…VYFL), 181-201 (AWLF…MIVG), 207-227 (IIIA…ISLW), 228-248 (MLAA…LKRY), 341-361 (LVVM…GLII), 378-398 (YKAA…IVLA), and 410-430 (VFFI…YWLF).

It belongs to the WzyE family. Probably part of a complex composed of WzxE, WzyE and WzzE.

Its subcellular location is the cell inner membrane. The protein operates within bacterial outer membrane biogenesis; enterobacterial common antigen biosynthesis. Probably involved in the polymerization of enterobacterial common antigen (ECA) trisaccharide repeat units. In Shigella flexneri, this protein is Probable ECA polymerase.